Consider the following 592-residue polypeptide: Aspartate--tRNA ligase (592 aa).

Glu-171 is a binding site for L-aspartate. Residues 195-198 are aspartate; it reads QLFK. Residue Arg-217 participates in L-aspartate binding. ATP contacts are provided by residues 217 to 219 and Gln-226; that span reads RDE. Residue His-448 participates in L-aspartate binding. Glu-482 lines the ATP pocket. Arg-489 is a binding site for L-aspartate. 534 to 537 lines the ATP pocket; that stretch reads GLDR.

Belongs to the class-II aminoacyl-tRNA synthetase family. Type 1 subfamily. Homodimer.

It is found in the cytoplasm. The enzyme catalyses tRNA(Asp) + L-aspartate + ATP = L-aspartyl-tRNA(Asp) + AMP + diphosphate. Its function is as follows. Catalyzes the attachment of L-aspartate to tRNA(Asp) in a two-step reaction: L-aspartate is first activated by ATP to form Asp-AMP and then transferred to the acceptor end of tRNA(Asp). In Vibrio parahaemolyticus serotype O3:K6 (strain RIMD 2210633), this protein is Aspartate--tRNA ligase.